Here is a 473-residue protein sequence, read N- to C-terminus: Lactate utilization protein B (473 aa).

4Fe-4S ferredoxin-type domains follow at residues 302 to 332 (GSEF…GHSY) and 351 to 380 (YDDY…LHDL). Cysteine 311, cysteine 314, cysteine 317, cysteine 321, cysteine 364, cysteine 367, and cysteine 371 together coordinate [4Fe-4S] cluster.

Belongs to the LutB/YkgF family.

In terms of biological role, is involved in L-lactate degradation and allows cells to grow with lactate as the sole carbon source. Has probably a role as an electron transporter during oxidation of L-lactate. The polypeptide is Lactate utilization protein B (Bacillus cytotoxicus (strain DSM 22905 / CIP 110041 / 391-98 / NVH 391-98)).